The following is a 217-amino-acid chain: Peptide methionine sulfoxide reductase MsrA (217 aa).

Residue Cys56 is part of the active site.

Belongs to the MsrA Met sulfoxide reductase family.

The catalysed reaction is L-methionyl-[protein] + [thioredoxin]-disulfide + H2O = L-methionyl-(S)-S-oxide-[protein] + [thioredoxin]-dithiol. It carries out the reaction [thioredoxin]-disulfide + L-methionine + H2O = L-methionine (S)-S-oxide + [thioredoxin]-dithiol. Functionally, has an important function as a repair enzyme for proteins that have been inactivated by oxidation. Catalyzes the reversible oxidation-reduction of methionine sulfoxide in proteins to methionine. The polypeptide is Peptide methionine sulfoxide reductase MsrA (Corynebacterium glutamicum (strain R)).